An 859-amino-acid chain; its full sequence is Protein FAM171A1 (859 aa).

Positions 1–20 (MSGSTAVALLFCVLSCSVWG) are cleaved as a signal peptide. Residues 21-307 (AGSKASHEHN…VTQDITSYHT (287 aa)) lie on the Extracellular side of the membrane. Asn-163, Asn-194, and Asn-198 each carry an N-linked (GlcNAc...) asparagine glycan. A helical membrane pass occupies residues 308-328 (IFLLAILGGIAFILLVLLCIL). Residues 329–859 (LYYCRRKCLK…ERPLLAFNKK (531 aa)) lie on the Cytoplasmic side of the membrane. 3 disordered regions span residues 397 to 421 (SRDFGSREELLSHQEEKSRMSLDNL), 484 to 509 (TNHVTAGSKPNIQEQMHPVPSAPEPE), and 771 to 859 (QSPS…FNKK). A compositionally biased stretch (basic and acidic residues) spans 400-416 (FGSREELLSHQEEKSRM). Composition is skewed to polar residues over residues 484–497 (TNHVTAGSKPNIQE) and 797–806 (SGSQTPSLQE). A compositionally biased stretch (basic and acidic residues) spans 838–852 (GENKKSPWQKREERP).

It belongs to the FAM171 family.

The protein resides in the cell membrane. May be involved in the regulation of the cytoskeletal dynamics, plays a role in actin stress fiber formation. The sequence is that of Protein FAM171A1 (fam171a1) from Xenopus laevis (African clawed frog).